The primary structure comprises 432 residues: Adenylosuccinate synthetase (432 aa).

GTP-binding positions include 12-18 (GDEGKGK) and 40-42 (GHT). Catalysis depends on D13, which acts as the Proton acceptor. The Mg(2+) site is built by D13 and G40. Residues 13 to 16 (DEGK), 38 to 41 (NAGH), T132, R146, Q226, T241, and R305 contribute to the IMP site. The Proton donor role is filled by H41. 301-307 (VVTGRKR) provides a ligand contact to substrate. GTP-binding positions include R307, 333–335 (KLD), and 415–417 (STS).

This sequence belongs to the adenylosuccinate synthetase family. Homodimer. Requires Mg(2+) as cofactor.

The protein localises to the cytoplasm. It carries out the reaction IMP + L-aspartate + GTP = N(6)-(1,2-dicarboxyethyl)-AMP + GDP + phosphate + 2 H(+). It functions in the pathway purine metabolism; AMP biosynthesis via de novo pathway; AMP from IMP: step 1/2. Functionally, plays an important role in the de novo pathway of purine nucleotide biosynthesis. Catalyzes the first committed step in the biosynthesis of AMP from IMP. In Rhizobium leguminosarum bv. trifolii (strain WSM2304), this protein is Adenylosuccinate synthetase.